Here is a 113-residue protein sequence, read N- to C-terminus: Protein PucD (113 aa).

In terms of biological role, seems to be required for the LH-II stabilization. The polypeptide is Protein PucD (pucD) (Rhodobacter capsulatus (Rhodopseudomonas capsulata)).